A 214-amino-acid polypeptide reads, in one-letter code: MNLEKQLHEGLEAISGLSADVAHLSSRLLRYIELITKWNSTHNLTSVRNPESMITRHMLDSLVVLPHISGPNIVDVGSGAGLPGIPIALARPEWQVVMVESNQKKAVFMQQVVVELRLQNVSIRQERVEKIKPGNKVDTVISRAFSSLERFMRLSKHLCENNVDHCRFIAMKGAFPDMELMQLPPEFSVEQIIPVAVPGLRAKRHLVVMRCHSE.

S-adenosyl-L-methionine contacts are provided by residues Gly77, Leu82, 128–129, and Arg143; that span reads VE.

This sequence belongs to the methyltransferase superfamily. RNA methyltransferase RsmG family.

Its subcellular location is the cytoplasm. It catalyses the reaction guanosine(527) in 16S rRNA + S-adenosyl-L-methionine = N(7)-methylguanosine(527) in 16S rRNA + S-adenosyl-L-homocysteine. Its function is as follows. Specifically methylates the N7 position of guanine in position 527 of 16S rRNA. This chain is Ribosomal RNA small subunit methyltransferase G, found in Nitrosomonas eutropha (strain DSM 101675 / C91 / Nm57).